We begin with the raw amino-acid sequence, 688 residues long: MFGWIHESFRQLVTRKYGKDIWEKIVHMSKFELGTESEIAHYYNDDETLRLVNSMANVIGIPIEEIWEAYGGFLIQFTMETGWDELLRAMAPDLEGFLDSLDSLHYFIDHVVYKTKLRGPSFRCDVQADGTLLLHYYSKRSGLYPIVKGVVREVARRIYDTEVVMKVQERKQEHLDAFVTEHVVFVITQIENANSTQPKSISSKADSQIDLSTGIYEISSSDFSLAFPYHICFDPDLFVEHFGNFIKKTFPNAMRQETRVTDLLELVHPEVPFSYESIKYYKNSLFVFRLKGLGDIVHNANDEAKTVLLKGSMVFIDEGKYILYMCSVNVTTVRELIERNLHLSDMQRHDGTRDVIMLNQSRMSQVELNRTLEETTKKLKKMAQELEIEKQKTDELLCELMPASVADSLRSGKAMDAKEFADCTLLFTDIVTFTNICAMCTPYDVVTLLNDLYLRFDRLVGLHDAYKVETIGDAYMIVGGVPERCENHAERVLNISIGMLMESKLVLSPITHKPIKIRLGVHCGPVVAGVVGIKMPRYCLFGDTVNVANKMESNGIQCKIHVSETGKLNGLKANPSYVFIDRGNTEIRGKGMMYTYFLERNDRKSVWELCSRPRSGEQTIDGYMELHDQSIYQEEGGQQENLTVENGNSAQNNHNNNNNTHHSGRKLMNGSSVDPGSHHIRSPTCTIS.

Residue His105 coordinates heme. Positions 358-401 (LNQSRMSQVELNRTLEETTKKLKKMAQELEIEKQKTDELLCELM) form a coiled coil. The Guanylate cyclase domain maps to 424-552 (TLLFTDIVTF…DTVNVANKME (129 aa)). Residues Asp429 and Asp473 each contribute to the Mg(2+) site. Residues 644–688 (VENGNSAQNNHNNNNNTHHSGRKLMNGSSVDPGSHHIRSPTCTIS) form a disordered region. Over residues 646–659 (NGNSAQNNHNNNNN) the composition is skewed to low complexity.

This sequence belongs to the adenylyl cyclase class-4/guanylyl cyclase family. As to quaternary structure, heterodimer; heterodimerizes with gcy-36, and possibly with other soluble guanylate cyclases. Heme serves as cofactor. Expressed in URX, AQR and PQR neurons. Also expressed in ALN, SDQ and BDU neurons, and variably in AVM, PLM and PLN neurons, pharyngeal and body wall muscles, and the excretory cell.

The protein resides in the cytoplasm. Its subcellular location is the cell projection. The protein localises to the dendrite. The enzyme catalyses GTP = 3',5'-cyclic GMP + diphosphate. With respect to regulation, regulated by molecular oxygen, which binds to the heme binding site. Probably not activated by nitric oxide (NO). Plays a central role in social feeding behavior and oxygen sensation by synthesizing 3',5'-cyclic guanosine monophosphate (cGMP) from GTP. Oxygen, which binds to its heme-binding sites, probably regulates social behavior by modulating its activity. cGMP is a common second messenger in sensory transduction and is implicated in oxygen sensation. Indeed, C.elegans exhibits a strong behavioral preference for 5-12% oxygen, avoiding higher and lower oxygen levels; a higher level of oxygen inducing a naturally polymorphic social feeding behavior. Involved in avoidance of hyperoxia and for oxygen-induced aggregation and bordering, probably by mediating oxygen-sensing in URX, AQR and PQR sensory neurons. In Caenorhabditis elegans, this protein is Soluble guanylate cyclase gcy-35 (gcy-35).